The primary structure comprises 261 residues: uncharacterized protein (261 aa).

The N-terminal stretch at 1–22 (MRDSKRVVLYISIMVLSIFIIG) is a signal peptide. Cys23 carries N-palmitoyl cysteine lipidation. Cys23 carries S-diacylglycerol cysteine lipidation.

It belongs to the staphylococcal tandem lipoprotein family.

It is found in the cell membrane. This is an uncharacterized protein from Staphylococcus aureus (strain N315).